An 80-amino-acid chain; its full sequence is Putative ATP-dependent Clp protease proteolytic subunit (80 aa).

Histidine 19 is an active-site residue.

Belongs to the peptidase S14 family. Component of the chloroplastic Clp protease core complex.

The protein localises to the plastid. The protein resides in the chloroplast. The catalysed reaction is Hydrolysis of proteins to small peptides in the presence of ATP and magnesium. alpha-casein is the usual test substrate. In the absence of ATP, only oligopeptides shorter than five residues are hydrolyzed (such as succinyl-Leu-Tyr-|-NHMec, and Leu-Tyr-Leu-|-Tyr-Trp, in which cleavage of the -Tyr-|-Leu- and -Tyr-|-Trp bonds also occurs).. Functionally, cleaves peptides in various proteins in a process that requires ATP hydrolysis. Has a chymotrypsin-like activity. Plays a major role in the degradation of misfolded proteins. The sequence is that of Putative ATP-dependent Clp protease proteolytic subunit from Pinus strobus (Eastern white pine).